Here is a 442-residue protein sequence, read N- to C-terminus: MSPSEAQQFLKENQVKYILAQFVDIHGSAKTKSVPAEHYKTVVTDGAGFAGFAIWGMGMTPNVDADYMAVGDASTLSLVPWQPGYARIACDGHTHGKPHEYDTRVVLKKQLEQITARGWTFFTGMEPEFSLLRKVEGKLLPADPGDTLSKPCYDYKGLSRARVFLERLSESLRSVGIDVYQIDHEDANGQFEINYTFTDALTSCDHYTFFKMGAAEIAAELGLICSFMPKPFSNRPGNGLHMHMSIGDGKRNLFEDKSDKHGLALSKLAYHWAAGLLKHAPALAALCCPTVNSYKRLVVGRSLTGATWAPAYICYGGNNRSGMIRSPGGRLELRLPDASCNAYLATAAVIAAGMDGVINELDPGAPQNDNLYEYSQAQLDAAGIKVLPQNLHEALLALEKDEVIRSALGPVVDEFLRLKHMEWVEYMRHVSDWEVNSYLEFF.

The GS beta-grasp domain maps to Asn13 to Lys97. The 340-residue stretch at Thr103–Phe442 folds into the GS catalytic domain.

It belongs to the glutamine synthetase family. Type 3 subfamily. The cofactor is Mg(2+).

The enzyme catalyses methylamine + L-glutamate + ATP = N(5)-methyl-L-glutamine + ADP + phosphate + H(+). Functionally, catalyzes the formation of N(5)-methyl-L-glutamine from glutamate and methylamine. The protein is Glutamate--methylamine ligase of Methyloversatilis universalis (strain ATCC BAA-1314 / DSM 25237 / JCM 13912 / CCUG 52030 / FAM5).